A 70-amino-acid polypeptide reads, in one-letter code: MLEDKKAAAKVEPLRKTRPCPECGKPSNREHYPFCSNRCREVDLSRWLTGSYAIPVADDETKADYPDEEN.

Zn(2+)-binding residues include Cys-20, Cys-23, Cys-35, and Cys-39.

The protein belongs to the DNA gyrase inhibitor YacG family. Interacts with GyrB. Zn(2+) is required as a cofactor.

Its function is as follows. Inhibits all the catalytic activities of DNA gyrase by preventing its interaction with DNA. Acts by binding directly to the C-terminal domain of GyrB, which probably disrupts DNA binding by the gyrase. In Rhizobium etli (strain ATCC 51251 / DSM 11541 / JCM 21823 / NBRC 15573 / CFN 42), this protein is DNA gyrase inhibitor YacG.